A 686-amino-acid polypeptide reads, in one-letter code: MGEFKVHRVRFFNYVPSGIRCVAYNNQSNRLAVSRTDGTVEIYNLSANYFQEKFFPGHESRGTEALCWAGGQRLFSAGLNGEILEYDLQALNIKYTLDAFGGPIWSMTASPSGSQLLVGCEDGSVKLFEVTPEKIQFARNFDRQKSRILSLCWHPAGTHVAAGSLDYISVFDVKSGSIIRKMVLDRQHLGVTKSRCIVWGVAFLSDGTVISVDSVGKVQLWDSATGTLVKSHLVANADVQSIAVADQEDSFVVGTAEGTVFHFQLVSMTSNSSEKQWVRTKPFQHHTHDVRAVAHSPTALISGGTDTHLVIRPLMERVEVKNYDAALRKITFPHRRLISCSKRRQLLLFQFAHHLELWRLGSTSATGKNGDTLPLSKNADHLLHLKTKGPENIICSCVSPCGSWIAYSTASRFFLYRLKYERDNISLQRVSKLPSFLRSALHILFSEDSTKLLVASNQGSLHIVHLSEGSFKHLHTFQPQSGTVEAMCLLAVSPDGNWLAASGTSAGVHVYDLHHLKLHCTVPAYNFPVTALAIAPNTNNLVIAHSDQQVFEFSIPEKQYTEWSRSLQKQGFHQLWLQRDTPITHISFHPKRPMHILLHDAYMFCIIDKSLPLPNEKTVLYNPLPPKNESDVFLRRTTHGFKMSKIYKPLLFMDLLDERTLVAVERPLDDIIAQLPPPIKKKKFGT.

11 WD repeats span residues 14 to 53 (YVPS…FQEK), 57 to 96 (GHES…IKYT), 99 to 138 (AFGG…IQFA), 143 to 181 (RQKS…IIRK), 193 to 231 (KSRC…LVKS), 234 to 273 (VANA…SNSS), 285 to 322 (HHTH…EVKN), 324 to 359 (DAAL…ELWR), 435 to 474 (SFLR…FKHL), 482 to 521 (GTVE…LHCT), and 524 to 563 (AYNF…YTEW). Residue Lys321 forms a Glycyl lysine isopeptide (Lys-Gly) (interchain with G-Cter in SUMO2) linkage.

Interacts with HIVEP1 Interacts with NOL11. Part of the small subunit (SSU) processome, composed of more than 70 proteins and the RNA chaperone small nucleolar RNA (snoRNA) U3. May be a component of the proposed t-UTP subcomplex of the ribosomal small subunit (SSU) processome containing at least UTP4, WDR43, HEATR1, UTP15, WDR75. Post-translationally, may be phosphorylated during mitosis; may control the association of this protein with WRD43 and UTP15. In terms of tissue distribution, expressed in liver.

Its subcellular location is the nucleus. It localises to the nucleolus. The protein localises to the chromosome. Ribosome biogenesis factor. Involved in nucleolar processing of pre-18S ribosomal RNA. Part of the small subunit (SSU) processome, first precursor of the small eukaryotic ribosomal subunit. During the assembly of the SSU processome in the nucleolus, many ribosome biogenesis factors, an RNA chaperone and ribosomal proteins associate with the nascent pre-rRNA and work in concert to generate RNA folding, modifications, rearrangements and cleavage as well as targeted d Involved in SSU pre-rRNA processing at sites A', A0, 1 and 2b. Required for optimal pre-ribosomal RNA transcription by RNA polymerase. May be a transcriptional regulator. This is U3 small nucleolar RNA-associated protein 4 homolog (Utp4) from Mus musculus (Mouse).